The sequence spans 591 residues: V-type ATP synthase alpha chain (591 aa).

232-239 (GPFGAGKT) is a binding site for ATP.

Belongs to the ATPase alpha/beta chains family.

The catalysed reaction is ATP + H2O + 4 H(+)(in) = ADP + phosphate + 5 H(+)(out). In terms of biological role, produces ATP from ADP in the presence of a proton gradient across the membrane. The V-type alpha chain is a catalytic subunit. The polypeptide is V-type ATP synthase alpha chain (Clostridium perfringens (strain SM101 / Type A)).